We begin with the raw amino-acid sequence, 1063 residues long: NAD-specific glutamate dehydrogenase (1063 aa).

It belongs to the Glu/Leu/Phe/Val dehydrogenases family. Highly divergent. As to quaternary structure, homotetramer.

It carries out the reaction L-glutamate + NAD(+) + H2O = 2-oxoglutarate + NH4(+) + NADH + H(+). Allosterically activated by NADP(+). This is NAD-specific glutamate dehydrogenase from Achlya klebsiana.